We begin with the raw amino-acid sequence, 163 residues long: Neurotrophin-3 (163 aa).

A signal peptide spans 1-3; it reads IQS. Residues 4–119 constitute a propeptide that is removed on maturation; it reads TSMDQGILTE…VLNRTSRRKR (116 aa). N-linked (GlcNAc...) asparagine glycosylation occurs at asparagine 112.

Belongs to the NGF-beta family.

Its subcellular location is the secreted. In terms of biological role, seems to promote the survival of visceral and proprioceptive sensory neurons. In Eryx colubrinus colubrinus, this protein is Neurotrophin-3 (NTF3).